The primary structure comprises 515 residues: MAEQVALSRTQVCGILREELYQGDAFHQADTHIFIIMGASGDLAKKKIYPTIWWLFRDGLLPEDTFIVGYARSRLTVDDIRKQSEPFFKVTPEERPKLEEFFARNSYVAGQYDDPASYKHLNSHMNALHQGMQANRLFYLALPPTVYEAVTKNIQEICMSQTGWNRIIVEKPFGRDLQSSNQLSNHISSLFREDQIYRIDHYLGKEMVQNLMVLRFANRIFGPIWNRDNIACVILTFKEPFGTEGRGGYFDEFGIIRDVMQNHLLQMLCLVAMEKPASTDSDDVRDEKVKVLKCISEVETDNVVLGQYVGNPSGEGEATNGYLDDPTVPHGSTTATFAAAVLYVENERWDGVPFILRCGKALNERKAEVRLQFRDVAGDIFHQQCKRNELVIRVQPNEAVYTKMMTKKPGMFFNPEESELDLTYGNRYKNVKLPDAYERLILDVFCGSQMHFVRSDELREAWRIFTPLLHKIDREKPQPIPYVYGSRGPTEADELMKRVGFQYEGTYKWVNPHKL.

Alanine 2 is subject to N-acetylalanine. At serine 8 the chain carries Phosphoserine. Position 10 is a phosphothreonine (threonine 10). Residues 38–45 and arginine 72 contribute to the NADP(+) site; that span reads GASGDLAK. N6-acetyllysine is present on lysine 89. 2 residues coordinate NADP(+): tyrosine 147 and lysine 171. D-glucose 6-phosphate contacts are provided by residues lysine 171, 201 to 205, glutamate 239, and aspartate 258; that span reads HYLGK. N6-(2-hydroxyisobutyryl)lysine; alternate is present on lysine 171. An N6-acetyllysine; alternate modification is found at lysine 171. The active-site Proton acceptor is the histidine 263. Arginine 357 provides a ligand contact to NADP(+). D-glucose 6-phosphate contacts are provided by lysine 360 and arginine 365. Lysine 366, arginine 370, and arginine 393 together coordinate NADP(+). A D-glucose 6-phosphate-binding site is contributed by glutamine 395. NADP(+) is bound by residues 401–403 and 421–423; these read YTK and DLT. Lysine 403 carries the post-translational modification N6-acetyllysine. Position 432 is an N6-acetyllysine (lysine 432). Arginine 487 contributes to the NADP(+) binding site. Lysine 497 is subject to N6-acetyllysine. NADP(+) contacts are provided by tyrosine 503 and tryptophan 509. Tyrosine 503 carries the post-translational modification Phosphotyrosine.

The protein belongs to the glucose-6-phosphate dehydrogenase family. Homotetramer; dimer of dimers. Interacts with SIRT2; the interaction is enhanced by H(2)O(2) treatment. Forms a ternary complex with ALDOB and TP53; this interaction is direct. ALDOB stabilizes the complex inhibiting G6PD activity and keeping oxidative pentose phosphate metabolism in check. Acetylated by ELP3 at Lys-403; acetylation inhibits its homodimerization and enzyme activity. Deacetylated by SIRT2 at Lys-403; deacetylation stimulates its enzyme activity.

The protein localises to the cytoplasm. It localises to the cytosol. Its subcellular location is the membrane. It carries out the reaction D-glucose 6-phosphate + NADP(+) = 6-phospho-D-glucono-1,5-lactone + NADPH + H(+). It participates in carbohydrate degradation; pentose phosphate pathway; D-ribulose 5-phosphate from D-glucose 6-phosphate (oxidative stage): step 1/3. Cytosolic glucose-6-phosphate dehydrogenase that catalyzes the first and rate-limiting step of the oxidative branch within the pentose phosphate pathway/shunt, an alternative route to glycolysis for the dissimilation of carbohydrates and a major source of reducing power and metabolic intermediates for fatty acid and nucleic acid biosynthetic processes. This is Glucose-6-phosphate 1-dehydrogenase (G6pdx) from Rattus norvegicus (Rat).